Here is a 321-residue protein sequence, read N- to C-terminus: Cytochrome c biogenesis protein CcsA (321 aa).

8 helical membrane-spanning segments follow: residues V17 to L37, T48 to I68, L71 to F91, L98 to L118, M143 to I163, I225 to N245, T259 to H273, and A286 to L306.

The protein belongs to the CcmF/CycK/Ccl1/NrfE/CcsA family. As to quaternary structure, may interact with Ccs1.

The protein resides in the plastid. It is found in the chloroplast thylakoid membrane. Functionally, required during biogenesis of c-type cytochromes (cytochrome c6 and cytochrome f) at the step of heme attachment. This chain is Cytochrome c biogenesis protein CcsA, found in Populus trichocarpa (Western balsam poplar).